We begin with the raw amino-acid sequence, 90 residues long: MASKKAGGSTRNGRDSEAKRLGVKAYGNELIPAGSIIVRQRGTKFHAGDNVGMGKDHTLFAKIDGYVEFKTKGALNRKTVSIRPYTGSEE.

Residues 1–21 are disordered; the sequence is MASKKAGGSTRNGRDSEAKRL.

Belongs to the bacterial ribosomal protein bL27 family.

The sequence is that of Large ribosomal subunit protein bL27 from Neisseria gonorrhoeae (strain ATCC 700825 / FA 1090).